The chain runs to 311 residues: Putative S-adenosyl-L-methionine-dependent methyltransferase MSMEG_0095/MSMEI_0092 (311 aa).

S-adenosyl-L-methionine-binding positions include D134 and 163-164 (DL).

Belongs to the UPF0677 family.

Functionally, exhibits S-adenosyl-L-methionine-dependent methyltransferase activity. The chain is Putative S-adenosyl-L-methionine-dependent methyltransferase MSMEG_0095/MSMEI_0092 from Mycolicibacterium smegmatis (strain ATCC 700084 / mc(2)155) (Mycobacterium smegmatis).